We begin with the raw amino-acid sequence, 124 residues long: MHLQPVICKLRLHSNSRRLYHILHLSLITINSLSNSTHHLHSKHRWKHNRNRAVGLVVPSRVLVANWEMLLYLALVLLLVVILSTAFFSILSRNICFSDLNLPNDFRSLKERKTHTEYGYVMVA.

Residues 70–90 (LLYLALVLLLVVILSTAFFSI) form a helical membrane-spanning segment.

It localises to the membrane. This is an uncharacterized protein from Saccharomyces cerevisiae (strain ATCC 204508 / S288c) (Baker's yeast).